A 294-amino-acid chain; its full sequence is tRNA pseudouridine synthase B (294 aa).

The Nucleophile role is filled by Asp-39.

This sequence belongs to the pseudouridine synthase TruB family. Type 1 subfamily.

It catalyses the reaction uridine(55) in tRNA = pseudouridine(55) in tRNA. Functionally, responsible for synthesis of pseudouridine from uracil-55 in the psi GC loop of transfer RNAs. The sequence is that of tRNA pseudouridine synthase B from Streptococcus pyogenes serotype M3 (strain ATCC BAA-595 / MGAS315).